Reading from the N-terminus, the 62-residue chain is MKVIAILFLLAFVLCTMEITMVEAGFGCPLFQFACDSHCRGMGRKGGYCGGNFKLTCICVVK.

A signal peptide spans 1–24 (MKVIAILFLLAFVLCTMEITMVEA). 3 disulfides stabilise this stretch: Cys28-Cys49, Cys35-Cys57, and Cys39-Cys59.

This sequence belongs to the invertebrate defensin family. Type 2 subfamily. As to expression, highly expressed in non-venom gland (hemolymph) and moderately expressed in venom gland.

The protein localises to the secreted. In terms of biological role, antibacterial peptide active against Gram-positive bacteria, but not on Gram-negative bacteria. Also has weak blocking activity on Kv1.1/KCNA1, Kv1.2/KCNA2, Kv1.3/KCNA3, KCa3.1/KCNN4/IK, KCa2.3/KCNN3/SK3 and Kv11.1/KCNH2/ERG1 channels (tested at 1 uM). It inhibits potassium channel current by interacting with the pore region. The protein is Defensin BmKDfsin6 of Olivierus martensii (Manchurian scorpion).